The following is a 179-amino-acid chain: ATP-dependent protease subunit HslV (179 aa).

Thr8 is an active-site residue. Na(+) contacts are provided by Gly163, Cys166, and Thr169.

It belongs to the peptidase T1B family. HslV subfamily. As to quaternary structure, a double ring-shaped homohexamer of HslV is capped on each side by a ring-shaped HslU homohexamer. The assembly of the HslU/HslV complex is dependent on binding of ATP.

It localises to the cytoplasm. It carries out the reaction ATP-dependent cleavage of peptide bonds with broad specificity.. Allosterically activated by HslU binding. Functionally, protease subunit of a proteasome-like degradation complex believed to be a general protein degrading machinery. This is ATP-dependent protease subunit HslV from Solibacter usitatus (strain Ellin6076).